Reading from the N-terminus, the 326-residue chain is Olfactory receptor 11H1 (326 aa).

The Extracellular portion of the chain corresponds to 1–44 (MCPLTLQVTGLMNVSEPNSSFAFVNEFILQGFSCEWTIQIFLFS). 2 N-linked (GlcNAc...) asparagine glycosylation sites follow: Asn-13 and Asn-18. A helical transmembrane segment spans residues 45–65 (LFTTTYALTITGNGAIAFVLW). The Cytoplasmic portion of the chain corresponds to 66-72 (CDRRLHT). A helical transmembrane segment spans residues 73-93 (PMYMFLGNFSFLEIWYVSSTV). The Extracellular segment spans residues 94 to 112 (PKMLVNFLSEKKNISFAGC). Asn-106 carries an N-linked (GlcNAc...) asparagine glycan. A disulfide bond links Cys-112 and Cys-194. A helical membrane pass occupies residues 113–133 (FLQFYFFFSLGTSECLLLTVM). The Cytoplasmic portion of the chain corresponds to 134–158 (AFDQYLAICRPLLYPNIMTGHLYAK). A helical transmembrane segment spans residues 159–179 (LVILCWVCGFLWFLIPIVLIS). Residues 180 to 216 (QMPFCGPNIIDHVVCDPGPRFALDCVSAPRIQLFCYT) lie on the Extracellular side of the membrane. A helical transmembrane segment spans residues 217–237 (LSSLVIFGNFLFIIGSYTLVL). Residues 238–259 (KAMLGMPSSTGRHKAFSTCGSH) lie on the Cytoplasmic side of the membrane. Residues 260–280 (LAVVSLCYSSLMVMYVSPGLG) form a helical membrane-spanning segment. Over 281-287 (HSTGMQK) the chain is Extracellular. A helical membrane pass occupies residues 288 to 308 (IETLFYAMVTPLFNPLIYSLQ). At 309 to 326 (NKEIKAALRKVLGSSNII) the chain is on the cytoplasmic side.

Belongs to the G-protein coupled receptor 1 family.

It is found in the cell membrane. Functionally, odorant receptor. This is Olfactory receptor 11H1 (OR11H1) from Homo sapiens (Human).